The primary structure comprises 382 residues: 1-deoxy-D-xylulose 5-phosphate reductoisomerase (382 aa).

The NADPH site is built by threonine 10, glycine 11, serine 12, isoleucine 13, glycine 36, lysine 37, asparagine 38, and asparagine 121. Lysine 122 contributes to the 1-deoxy-D-xylulose 5-phosphate binding site. Glutamate 123 provides a ligand contact to NADPH. Residue aspartate 147 participates in Mn(2+) binding. Residues serine 148, glutamate 149, serine 173, and histidine 196 each contribute to the 1-deoxy-D-xylulose 5-phosphate site. Glutamate 149 serves as a coordination point for Mn(2+). Glycine 202 contacts NADPH. The 1-deoxy-D-xylulose 5-phosphate site is built by serine 209, asparagine 214, lysine 215, and glutamate 218. Glutamate 218 is a Mn(2+) binding site.

Belongs to the DXR family. Mg(2+) serves as cofactor. Mn(2+) is required as a cofactor.

The enzyme catalyses 2-C-methyl-D-erythritol 4-phosphate + NADP(+) = 1-deoxy-D-xylulose 5-phosphate + NADPH + H(+). The protein operates within isoprenoid biosynthesis; isopentenyl diphosphate biosynthesis via DXP pathway; isopentenyl diphosphate from 1-deoxy-D-xylulose 5-phosphate: step 1/6. Functionally, catalyzes the NADPH-dependent rearrangement and reduction of 1-deoxy-D-xylulose-5-phosphate (DXP) to 2-C-methyl-D-erythritol 4-phosphate (MEP). This chain is 1-deoxy-D-xylulose 5-phosphate reductoisomerase, found in Halalkalibacterium halodurans (strain ATCC BAA-125 / DSM 18197 / FERM 7344 / JCM 9153 / C-125) (Bacillus halodurans).